A 160-amino-acid polypeptide reads, in one-letter code: Probable cyclic pyranopterin monophosphate synthase (160 aa).

Over residues 1-12 (MSDDSELTHVTD) the composition is skewed to basic and acidic residues. The segment at 1-24 (MSDDSELTHVTDDGDAQMVDVGEK) is disordered. Residues 78–80 (MCH) and 114–115 (ME) each bind substrate. Asp-129 is a catalytic residue.

It belongs to the MoaC family. Homohexamer; trimer of dimers.

It catalyses the reaction (8S)-3',8-cyclo-7,8-dihydroguanosine 5'-triphosphate = cyclic pyranopterin phosphate + diphosphate. The protein operates within cofactor biosynthesis; molybdopterin biosynthesis. Functionally, catalyzes the conversion of (8S)-3',8-cyclo-7,8-dihydroguanosine 5'-triphosphate to cyclic pyranopterin monophosphate (cPMP). In Natronomonas pharaonis (strain ATCC 35678 / DSM 2160 / CIP 103997 / JCM 8858 / NBRC 14720 / NCIMB 2260 / Gabara) (Halobacterium pharaonis), this protein is Probable cyclic pyranopterin monophosphate synthase.